Consider the following 136-residue polypeptide: MARTKQTARKSTGGKAPRKQLASKAARKSAPSTGGVKKPHRYKPGTVALREIRRFQKSTELLIRKLPFQRLVREIAQDFKTDLRFQSSAIGALQESVEAYLVSLFEDTNLAAIHAKRVTIQKKDIKLARRLRGERS.

Positions 1 to 43 (MARTKQTARKSTGGKAPRKQLASKAARKSAPSTGGVKKPHRYK) are disordered. Residue lysine 5 is modified to N6,N6,N6-trimethyllysine; alternate. Residue lysine 5 is modified to N6,N6-dimethyllysine; alternate. An N6-methyllysine; alternate mark is found at lysine 5 and lysine 10. An N6-acetyllysine; alternate modification is found at lysine 10. Serine 11 is modified (phosphoserine). Lysine 15 is subject to N6,N6-dimethyllysine; alternate. An N6-methyllysine; alternate mark is found at lysine 15, lysine 19, lysine 24, lysine 28, and lysine 37. N6-acetyllysine; alternate occurs at positions 15, 19, 24, 28, and 37. Residues lysine 28 and lysine 37 each carry the N6,N6,N6-trimethyllysine; alternate modification. 2 positions are modified to N6,N6-dimethyllysine; alternate: lysine 28 and lysine 37. N6-acetyllysine occurs at positions 57 and 65. Lysine 80 is modified (N6,N6,N6-trimethyllysine; alternate). At lysine 80 the chain carries N6,N6-dimethyllysine; alternate. Position 80 is an N6-methyllysine; alternate (lysine 80).

This sequence belongs to the histone H3 family. As to quaternary structure, the nucleosome is a histone octamer containing two molecules each of H2A, H2B, H3 and H4 assembled in one H3-H4 heterotetramer and two H2A-H2B heterodimers. The octamer wraps approximately 147 bp of DNA. Phosphorylated by IPL1 to form H3S10ph. H3S10ph promotes subsequent H3K14ac formation by GCN5 and is required for transcriptional activation through TBP recruitment to the promoters. In terms of processing, mono-, di- and trimethylated by the COMPASS complex to form H3K4me1/2/3. H3K4me activates gene expression by regulating transcription elongation and plays a role in telomere length maintenance. H3K4me enrichment correlates with transcription levels, and occurs in a 5' to 3' gradient with H3K4me3 enrichment at the 5'-end of genes, shifting to H3K4me2 and then H3K4me1. Methylated by SET2 to form H3K36me. H3K36me represses gene expression. Methylated by DOT1 to form H3K79me. H3K79me is required for association of SIR proteins with telomeric regions and for telomeric silencing. The COMPASS-mediated formation of H3K4me2/3 and the DOT1-mediated formation of H3K79me require H2BK123ub1. Post-translationally, acetylation of histone H3 leads to transcriptional activation. H3K14ac formation by GCN5 is promoted by H3S10ph. H3K14ac can also be formed by ESA1. H3K56ac formation occurs predominantly in newly synthesized H3 molecules during G1, S and G2/M of the cell cycle and may be involved in DNA repair.

The protein resides in the nucleus. It localises to the chromosome. In terms of biological role, core component of nucleosome. Nucleosomes wrap and compact DNA into chromatin, limiting DNA accessibility to the cellular machineries which require DNA as a template. Histones thereby play a central role in transcription regulation, DNA repair, DNA replication and chromosomal stability. DNA accessibility is regulated via a complex set of post-translational modifications of histones, also called histone code, and nucleosome remodeling. This Candida glabrata (strain ATCC 2001 / BCRC 20586 / JCM 3761 / NBRC 0622 / NRRL Y-65 / CBS 138) (Yeast) protein is Histone H3 (HHT1).